Reading from the N-terminus, the 265-residue chain is MSAAPLVGYSSSGSEDESEDGMRTRPGDGSHRRGQSPLPRQRFPVPDSVLNMFPGTEEGPEDDSTKHGGRVRTFPHERGNWATHVYVPYEAKEEFLDLLDVLLPHAQTYVPRLVRMKVFHLSLSQSVVLRHHWILPFVQALKARMTSFHRFFFTANQVKIYTNQEKTRTFIGLEVTSGHAQFLDLVSEVDRVMEEFNLTTFYQDPSFHLSLAWCVGDARLQLEGQCLQELQAIVDGFEDAEVLLRVHTEQVRCKSGNKFFSMPLK.

The disordered stretch occupies residues 1 to 72; it reads MSAAPLVGYS…DSTKHGGRVR (72 aa). Positions 20-31 are enriched in basic and acidic residues; the sequence is DGMRTRPGDGSH. The Proton acceptor role is filled by H120. Residue 120–122 participates in AMP binding; the sequence is HLS. UMP is bound by residues Q164, Y202, and 206 to 210; that span reads SFHLS. AMP contacts are provided by residues Y202 and 204–210; that span reads DPSFHLS. H208 acts as the Proton donor in catalysis.

The protein belongs to the 2H phosphoesterase superfamily. USB1 family. As to quaternary structure, interacts with PLRG1, CDC5L and PRPF19.

The protein localises to the nucleus. It catalyses the reaction a 3'-end uridylyl-uridine-RNA = a 3'-end 2',3'-cyclophospho-uridine-RNA + uridine. It carries out the reaction a 3'-end uridylyl-adenosine-RNA = a 3'-end 2',3'-cyclophospho-uridine-RNA + adenosine. Its activity is regulated as follows. 3'-5' RNA exonuclease activity is inhibited by a 3' phosphate terminated RNA. 3'-5' RNA exonuclease that trims the 3' end of oligo(U) and oligo(A) tracts of the pre-U6 small nuclear RNA (snRNA) molecule, leading to the formation of a mature U6 snRNA 3' end-terminated with a 2',3'-cyclic phosphate. Participates in the U6 snRNA 3' end processing that prevents U6 snRNA degradation. In addition also removes uridines from the 3' end of U6atac snRNA and possibly the vault RNA VTRNA1-1. This Homo sapiens (Human) protein is U6 snRNA phosphodiesterase 1.